The following is a 439-amino-acid chain: Gap junction gamma-2 protein (439 aa).

At Met-1–Lys-25 the chain is on the cytoplasmic side. The chain crosses the membrane as a helical span at residues Val-26 to Ile-46. At Tyr-47–Arg-78 the chain is on the extracellular side. A helical transmembrane segment spans residues Phe-79–Val-99. Residues His-100 to Gln-216 lie on the Cytoplasmic side of the membrane. Residues Gln-108–Cys-178 form a disordered region. A compositionally biased stretch (basic residues) spans Arg-112–Arg-125. The segment covering Asp-140–Ala-174 has biased composition (acidic residues). Residues Leu-217–Phe-237 traverse the membrane as a helical segment. The Extracellular segment spans residues Glu-238 to Thr-265. A helical transmembrane segment spans residues Val-266–Met-286. Over Ala-287–Ile-439 the chain is Cytoplasmic. Residues Ala-364–Ile-439 form a disordered region. The residue at position 371 (Ser-371) is a Phosphoserine. The segment covering Pro-378–Arg-393 has biased composition (low complexity).

This sequence belongs to the connexin family. Gamma-type subfamily. As to quaternary structure, a connexon is composed of a hexamer of connexins. Interacts with TJP1. As to expression, expressed in central nervous system, in sciatic nerve and sural nerve. Also detected in skeletal muscles.

It is found in the cell membrane. Its subcellular location is the cell junction. It localises to the gap junction. Its function is as follows. One gap junction consists of a cluster of closely packed pairs of transmembrane channels, the connexons, through which materials of low MW diffuse from one cell to a neighboring cell. May play a role in myelination in central and peripheral nervous systems. In Homo sapiens (Human), this protein is Gap junction gamma-2 protein (GJC2).